The chain runs to 150 residues: Arginine repressor (150 aa).

The protein belongs to the ArgR family.

It localises to the cytoplasm. It functions in the pathway amino-acid biosynthesis; L-arginine biosynthesis [regulation]. Functionally, regulates arginine biosynthesis genes. This chain is Arginine repressor, found in Clostridium botulinum (strain Alaska E43 / Type E3).